We begin with the raw amino-acid sequence, 484 residues long: ATP synthase subunit beta (484 aa).

An ATP-binding site is contributed by 156–163; sequence GGAGVGKT.

The protein belongs to the ATPase alpha/beta chains family. F-type ATPases have 2 components, CF(1) - the catalytic core - and CF(0) - the membrane proton channel. CF(1) has five subunits: alpha(3), beta(3), gamma(1), delta(1), epsilon(1). CF(0) has three main subunits: a(1), b(2) and c(9-12). The alpha and beta chains form an alternating ring which encloses part of the gamma chain. CF(1) is attached to CF(0) by a central stalk formed by the gamma and epsilon chains, while a peripheral stalk is formed by the delta and b chains.

It localises to the cell inner membrane. It carries out the reaction ATP + H2O + 4 H(+)(in) = ADP + phosphate + 5 H(+)(out). Produces ATP from ADP in the presence of a proton gradient across the membrane. The catalytic sites are hosted primarily by the beta subunits. This is ATP synthase subunit beta from Rhizorhabdus wittichii (strain DSM 6014 / CCUG 31198 / JCM 15750 / NBRC 105917 / EY 4224 / RW1) (Sphingomonas wittichii).